The following is a 427-amino-acid chain: Septin-8 (427 aa).

The Septin-type G domain occupies 39-305 (QGFCFNILCV…ELYRRCKLEE (267 aa)). The tract at residues 49–56 (GETGIGKS) is G1 motif. Residues 49–56 (GETGIGKS), Gly-104, 185–193 (KADTISKSE), Gly-239, and Arg-254 each bind GTP. Positions 101 to 104 (DTVG) are G3 motif. Positions 184–187 (AKAD) are G4 motif. Residues 321-409 (QETYEAKRKE…KAAMEALQSQ (89 aa)) are a coiled coil. The disordered stretch occupies residues 373–427 (RVHQEESKKVEDKRRDLEEEMNSFNRRKAAMEALQSQSFQATSQQPLKKDKDRKN). Over residues 374–389 (VHQEESKKVEDKRRDL) the composition is skewed to basic and acidic residues. Over residues 406-418 (LQSQSFQATSQQP) the composition is skewed to polar residues.

The protein belongs to the TRAFAC class TrmE-Era-EngA-EngB-Septin-like GTPase superfamily. Septin GTPase family.

The protein localises to the cytoplasm. The protein resides in the cytoskeleton. Its subcellular location is the synapse. It is found in the cell projection. It localises to the axon. The protein localises to the cytoplasmic vesicle. The protein resides in the secretory vesicle. Its subcellular location is the synaptic vesicle membrane. It is found in the presynapse. This Xenopus tropicalis (Western clawed frog) protein is Septin-8.